A 426-amino-acid chain; its full sequence is Histidine--tRNA ligase (426 aa).

This sequence belongs to the class-II aminoacyl-tRNA synthetase family. In terms of assembly, homodimer.

It is found in the cytoplasm. It catalyses the reaction tRNA(His) + L-histidine + ATP = L-histidyl-tRNA(His) + AMP + diphosphate + H(+). The protein is Histidine--tRNA ligase of Legionella pneumophila subsp. pneumophila (strain Philadelphia 1 / ATCC 33152 / DSM 7513).